A 146-amino-acid polypeptide reads, in one-letter code: Large ribosomal subunit protein bL19 (146 aa).

It belongs to the bacterial ribosomal protein bL19 family.

In terms of biological role, this protein is located at the 30S-50S ribosomal subunit interface and may play a role in the structure and function of the aminoacyl-tRNA binding site. In Bartonella bacilliformis (strain ATCC 35685 / KC583 / Herrer 020/F12,63), this protein is Large ribosomal subunit protein bL19.